The following is a 110-amino-acid chain: UPF0122 protein BPUM_1495 (110 aa).

The protein belongs to the UPF0122 family.

Its function is as follows. Might take part in the signal recognition particle (SRP) pathway. This is inferred from the conservation of its genetic proximity to ftsY/ffh. May be a regulatory protein. This chain is UPF0122 protein BPUM_1495, found in Bacillus pumilus (strain SAFR-032).